The sequence spans 612 residues: Rhamnogalacturonan exolyase YesX (612 aa).

N119 serves as a coordination point for substrate. Positions 120, 125, 127, 129, 131, and 133 each coordinate Ca(2+). Residues D139, E154, and R174 each contribute to the substrate site. Ca(2+)-binding residues include D189, D191, D193, K195, and E197. G205 and R222 together coordinate substrate. Ca(2+) is bound by residues H330, D336, D338, D340, K342, E344, D353, H354, H366, D368, D374, D376, R379, G381, E383, and E389. Substrate is bound at residue R419. Residues D472, D474, V476, and E478 each coordinate Ca(2+). 516–518 serves as a coordination point for substrate; sequence NGT. Residues N527, F529, D531, R533, E535, N576, and A578 each coordinate Ca(2+). Position 579 (Y579) interacts with substrate. N580 contacts Ca(2+).

Belongs to the polysaccharide lyase 11 family. In terms of assembly, monomer. It depends on Mn(2+) as a cofactor. Zn(2+) serves as cofactor. The cofactor is Co(2+). Ca(2+) is required as a cofactor.

Its subcellular location is the secreted. It catalyses the reaction Exotype eliminative cleavage of alpha-L-rhamnopyranosyl-(1-&gt;4)-alpha-D-galactopyranosyluronic acid bonds of rhamnogalacturonan I oligosaccharides containing alpha-L-rhamnopyranose at the reducing end and 4-deoxy-4,5-unsaturated D-galactopyranosyluronic acid at the non-reducing end. The products are the disaccharide 2-O-(4-deoxy-beta-L-threo-hex-4-enopyranuronosyl)-alpha-L-rhamnopyranose and the shortened rhamnogalacturonan oligosaccharide containing one 4-deoxy-4,5-unsaturated D-galactopyranosyluronic acid at the non-reducing end.. Functionally, pectinolytic enzyme that degrades type I rhamnogalacturonan from plant cell walls and releases disaccharide products. Degrades rhamnogalacturonan, polygalacturonic acid and pectic acid. Has very low activity on pectin. The sequence is that of Rhamnogalacturonan exolyase YesX (yesX) from Bacillus subtilis (strain 168).